A 339-amino-acid chain; its full sequence is RNA 3'-terminal phosphate cyclase (339 aa).

ATP-binding positions include Gln-103 and 283-287 (HLADQ). The Tele-AMP-histidine intermediate role is filled by His-308.

It belongs to the RNA 3'-terminal cyclase family. Type 1 subfamily.

The protein resides in the cytoplasm. It catalyses the reaction a 3'-end 3'-phospho-ribonucleotide-RNA + ATP = a 3'-end 2',3'-cyclophospho-ribonucleotide-RNA + AMP + diphosphate. In terms of biological role, catalyzes the conversion of 3'-phosphate to a 2',3'-cyclic phosphodiester at the end of RNA. The mechanism of action of the enzyme occurs in 3 steps: (A) adenylation of the enzyme by ATP; (B) transfer of adenylate to an RNA-N3'P to produce RNA-N3'PP5'A; (C) and attack of the adjacent 2'-hydroxyl on the 3'-phosphorus in the diester linkage to produce the cyclic end product. The biological role of this enzyme is unknown but it is likely to function in some aspects of cellular RNA processing. This is RNA 3'-terminal phosphate cyclase from Salmonella typhimurium (strain LT2 / SGSC1412 / ATCC 700720).